A 509-amino-acid polypeptide reads, in one-letter code: Cytochrome P450 4A10 (509 aa).

2 helical membrane passes run Phe11–Leu31 and Leu121–His141. Glu320 provides a ligand contact to heme. The residue at position 439 (Ser439) is a Phosphoserine. Cys456 contacts heme.

Belongs to the cytochrome P450 family. The cofactor is heme. Expressed in liver (at protein level) and kidney (at protein level).

The protein localises to the endoplasmic reticulum membrane. It localises to the microsome membrane. It catalyses the reaction an omega-methyl-long-chain fatty acid + reduced [NADPH--hemoprotein reductase] + O2 = an omega-hydroxy-long-chain fatty acid + oxidized [NADPH--hemoprotein reductase] + H2O + H(+). The enzyme catalyses dodecanoate + reduced [NADPH--hemoprotein reductase] + O2 = 12-hydroxydodecanoate + oxidized [NADPH--hemoprotein reductase] + H2O + H(+). It carries out the reaction dodecanoate + reduced [NADPH--hemoprotein reductase] + O2 = 11-hydroxydodecanoate + oxidized [NADPH--hemoprotein reductase] + H2O + H(+). The catalysed reaction is tetradecanoate + reduced [NADPH--hemoprotein reductase] + O2 = 14-hydroxytetradecanoate + oxidized [NADPH--hemoprotein reductase] + H2O + H(+). It catalyses the reaction hexadecanoate + reduced [NADPH--hemoprotein reductase] + O2 = 16-hydroxyhexadecanoate + oxidized [NADPH--hemoprotein reductase] + H2O + H(+). The enzyme catalyses (9Z)-octadecenoate + reduced [NADPH--hemoprotein reductase] + O2 = 18-hydroxy-(9Z)-octadecenoate + oxidized [NADPH--hemoprotein reductase] + H2O + H(+). It carries out the reaction (9Z,12Z)-octadecadienoate + reduced [NADPH--hemoprotein reductase] + O2 = 18-hydroxy-(9Z,12Z)-octadecadienoate + oxidized [NADPH--hemoprotein reductase] + H2O + H(+). The catalysed reaction is (9Z,12Z)-octadecadienoate + reduced [NADPH--hemoprotein reductase] + O2 = 17-hydroxy-(9Z,12Z)-octadecadienoate + oxidized [NADPH--hemoprotein reductase] + H2O + H(+). It catalyses the reaction (5Z,8Z,11Z,14Z)-eicosatetraenoate + reduced [NADPH--hemoprotein reductase] + O2 = 20-hydroxy-(5Z,8Z,11Z,14Z)-eicosatetraenoate + oxidized [NADPH--hemoprotein reductase] + H2O + H(+). The enzyme catalyses 8,9-epoxy-(5Z,11Z,14Z)-eicosatrienoate + reduced [NADPH--hemoprotein reductase] + O2 = 20-hydroxy-8,9-epoxy-(5Z,11Z,14Z)-eicosatrienoate + oxidized [NADPH--hemoprotein reductase] + H2O + H(+). Functionally, a cytochrome P450 monooxygenase involved in the metabolism of fatty acids. Catalyzes predominantly the oxidation of the terminal carbon (omega-oxidation) of long-chain fatty acids. Acts as a major omega-hydroxylase for dodecanoic (lauric) acid in liver. In kidney, may play an important role in omega-hydroxylation of (5Z,8Z,11Z,14Z)-eicosatetraenoic acid (arachidonate) to 20-hydroxyeicosatetraenoic acid (20-HETE), a signaling molecule acting both as vasoconstrictive and natriuretic with overall effect on arterial blood pressure. Also participates in the formation of anti-inflammatory hydroxyepoxyeicosatrienoic acids (HEETs) in kidney by converting 8,9-epoxyeicosatrienoic acid (EET) to 20,8,9-HEET, an activator of PPARA. Displays substantially lower fatty acid omega-1 hydroxylase activity. Mechanistically, uses molecular oxygen inserting one oxygen atom into a substrate, and reducing the second into a water molecule, with two electrons provided by NADPH via cytochrome P450 reductase (CPR; NADPH-ferrihemoprotein reductase). This Rattus norvegicus (Rat) protein is Cytochrome P450 4A10 (Cyp4a10).